We begin with the raw amino-acid sequence, 282 residues long: MSDREQSSGNTAFENPKALDSSEGEFISENNDQSRHSQESICKIYTAGKNNEYIYIGRQKFLRDDLFEAFGGTLNPGLAPAPVHKFANPAPLGLSGFALTTFVLSMFNARAQGITIPNVVVGCAMFYGGLVQLIAGIWEIALENTFGGTALCSFGGFWLSFGAIYIPWFGILDAYKDKESDLGNALGFYLLGWALFTFGLSVCTMKSTIMFFALFFLLAVTFLLLSIANFTGEVGVTRAGGVLGVIVAFIAWYNAYAGIATRQNSYIMVHPFALPSNDKVFF.

Residues 1–34 (MSDREQSSGNTAFENPKALDSSEGEFISENNDQS) are disordered. The residue at position 2 (S2) is an N-acetylserine. S2, S7, S21, S22, S28, and S40 each carry phosphoserine. The Extracellular segment spans residues 2–86 (SDREQSSGNT…GLAPAPVHKF (85 aa)). Residues 87-107 (ANPAPLGLSGFALTTFVLSMF) traverse the membrane as a helical segment. Topologically, residues 108 to 119 (NARAQGITIPNV) are cytoplasmic. A helical membrane pass occupies residues 120–140 (VVGCAMFYGGLVQLIAGIWEI). Over 141-150 (ALENTFGGTA) the chain is Extracellular. Residues 151–171 (LCSFGGFWLSFGAIYIPWFGI) traverse the membrane as a helical segment. Residues 172–184 (LDAYKDKESDLGN) are Cytoplasmic-facing. Residues 185–205 (ALGFYLLGWALFTFGLSVCTM) form a helical membrane-spanning segment. The Extracellular portion of the chain corresponds to 206 to 207 (KS). Residues 208–228 (TIMFFALFFLLAVTFLLLSIA) traverse the membrane as a helical segment. Residues 229-238 (NFTGEVGVTR) lie on the Cytoplasmic side of the membrane. Residues 239–259 (AGGVLGVIVAFIAWYNAYAGI) form a helical membrane-spanning segment. At 260–282 (ATRQNSYIMVHPFALPSNDKVFF) the chain is on the extracellular side.

This sequence belongs to the acetate uptake transporter (AceTr) (TC 2.A.96) family.

It is found in the cell membrane. Its function is as follows. Transporter protein required for ammonia export. Involved in acetate resistance. In Saccharomyces cerevisiae (strain ATCC 204508 / S288c) (Baker's yeast), this protein is Ammonia transport outward protein 2 (ATO2).